The following is a 462-amino-acid chain: uncharacterized protein (462 aa).

The tract at residues 1–108 is disordered; that stretch reads MEDSNTNKDI…NGQDDQDEMD (108 aa). Basic and acidic residues predominate over residues 36–51; the sequence is TVERILERKQKERESK. Low complexity predominate over residues 64–95; the sequence is SSPSSLLSSPISSNDNNNNNNNNNNESFDINN. The stretch at 119-150 forms a coiled coil; it reads LLKRKAALAAKKKESLAEQMKKYNQQYDSIIS. The interval 188–208 is disordered; sequence SKLQSLNNNTSPSTSSSNLID. Positions 190-208 are enriched in low complexity; it reads LQSLNNNTSPSTSSSNLID.

This is an uncharacterized protein from Dictyostelium discoideum (Social amoeba).